A 452-amino-acid polypeptide reads, in one-letter code: MSRLFGTDGVRGLANGLLTAELAMQLAQAAAVVLGHERSTNGARPRAVVARDPRASGEFISAAVSAGLSSSGIDVYDAGVLPTPAAAYLVADLHADFGVMISASHNPAPDNGIKFFAKGGQKLPDEVEDAIEAQMAKDPVRPTGSDVGRIQTFSDAEDRYIVHLLGTLPHRLDGLKVVLDCAHGAASGCSPQLFNDAGAEIVVIGAEPDGLNINDGVGSTHLGALQRAVVEHGADLGIAHDGDADRCLAIDHEGNEVDGDQIMAILALALKESGKLKDNVLVATVMSNLGLKIALRNAGISIRETAVGDRYVLEEMRDGGYNLGGEQSGHVIFADHATTGDGLLTGLQLAAQVALTGKSLKELATVMTKLPQLMINVKKVDKARAGTDEGVLAAVAEASAELGETGRVLLRPSGTEALVRVMVEAADMPTAERICKHLAAVVEERLAVAPAV.

The active-site Phosphoserine intermediate is the Ser-104. Mg(2+) is bound by residues Ser-104, Asp-241, Asp-243, and Asp-245. Position 104 is a phosphoserine (Ser-104).

The protein belongs to the phosphohexose mutase family. Requires Mg(2+) as cofactor. Post-translationally, activated by phosphorylation.

It carries out the reaction alpha-D-glucosamine 1-phosphate = D-glucosamine 6-phosphate. Its function is as follows. Catalyzes the conversion of glucosamine-6-phosphate to glucosamine-1-phosphate. The chain is Phosphoglucosamine mutase from Arthrobacter sp. (strain FB24).